Consider the following 196-residue polypeptide: GTP cyclohydrolase-2 (196 aa).

Residue 49 to 53 (RVHSE) coordinates GTP. Residues Cys54, Cys65, and Cys67 each contribute to the Zn(2+) site. GTP contacts are provided by residues Gln70, 92-94 (EGR), and Thr114. The Proton acceptor role is filled by Asp126. Arg128 (nucleophile) is an active-site residue. Residues Thr149 and Lys154 each contribute to the GTP site.

It belongs to the GTP cyclohydrolase II family. Homodimer. Requires Zn(2+) as cofactor.

It carries out the reaction GTP + 4 H2O = 2,5-diamino-6-hydroxy-4-(5-phosphoribosylamino)-pyrimidine + formate + 2 phosphate + 3 H(+). It participates in cofactor biosynthesis; riboflavin biosynthesis; 5-amino-6-(D-ribitylamino)uracil from GTP: step 1/4. Its function is as follows. Catalyzes the conversion of GTP to 2,5-diamino-6-ribosylamino-4(3H)-pyrimidinone 5'-phosphate (DARP), formate and pyrophosphate. The chain is GTP cyclohydrolase-2 from Enterobacter sp. (strain 638).